A 259-amino-acid chain; its full sequence is Sesquipedalian-2 (259 aa).

One can recognise a PH domain in the interval 17-121; the sequence is PADHTGFLRS…WVKALSRASF (105 aa). Residues 124 to 150 adopt a coiled-coil conformation; that stretch reads MRLVVRELESQLQDARQSLALHRCASQ. The tract at residues 155–178 is disordered; the sequence is SCSKSQAPDHRAPDPENGHFLPRD. Positions 161–178 are enriched in basic and acidic residues; it reads APDHRAPDPENGHFLPRD. The F&amp;H signature appears at 223 to 235; it reads CFSTLHDWYGKEI.

The protein belongs to the sesquipedalian family. Forms homodimers and heterodimers with PHETA1. Interacts with OCRL and INPP5B.

Its subcellular location is the early endosome. It is found in the recycling endosome. The protein localises to the golgi apparatus. It localises to the trans-Golgi network. The protein resides in the cytoplasmic vesicle. Its subcellular location is the clathrin-coated vesicle. Plays a role in endocytic trafficking. Required for receptor recycling from endosomes, both to the trans-Golgi network and the plasma membrane. This chain is Sesquipedalian-2, found in Mus musculus (Mouse).